A 193-amino-acid polypeptide reads, in one-letter code: MDMSSKEVLMESPPDYSAGPRSQFRIPCCPVHLKRLLIVVVVVVLVVVVIVGALLMGLHMSQKHTEMVLEMSIGAPETQKRLAPSERADTIATFSIGSTGIVVYDYQRLLTAYKPAPGTYCYIMKMAPESIPSLEAFARKLQNFRAKPSTPTSKLGQEEGHDTGSESDSSGRDLAFLGLAVSTLCGELPLYYI.

A propeptide spanning residues 1-23 is cleaved from the precursor; the sequence is MDMSSKEVLMESPPDYSAGPRSQ. 2 S-palmitoyl cysteine lipidation sites follow: Cys-28 and Cys-29. The propeptide occupies 59-193; the sequence is HMSQKHTEMV…LCGELPLYYI (135 aa). The BRICHOS domain maps to 94–193; it reads FSIGSTGIVV…LCGELPLYYI (100 aa). A disulfide bridge links Cys-121 with Cys-185. The tract at residues 147-170 is disordered; that stretch reads KPSTPTSKLGQEEGHDTGSESDSS.

Its subcellular location is the secreted. The protein localises to the extracellular space. It localises to the surface film. Its function is as follows. Pulmonary surfactant associated proteins promote alveolar stability by lowering the surface tension at the air-liquid interface in the peripheral air spaces. This chain is Surfactant protein C, found in Mus musculus (Mouse).